A 156-amino-acid polypeptide reads, in one-letter code: Large ribosomal subunit protein uL22 (156 aa).

Belongs to the universal ribosomal protein uL22 family. Part of the 50S ribosomal subunit.

In terms of biological role, this protein binds specifically to 23S rRNA. It makes multiple contacts with different domains of the 23S rRNA in the assembled 50S subunit and ribosome. Functionally, the globular domain of the protein is located near the polypeptide exit tunnel on the outside of the subunit, while an extended beta-hairpin is found that lines the wall of the exit tunnel in the center of the 70S ribosome. This chain is Large ribosomal subunit protein uL22, found in Hyperthermus butylicus (strain DSM 5456 / JCM 9403 / PLM1-5).